We begin with the raw amino-acid sequence, 119 residues long: uncharacterized protein (119 aa).

The protein localises to the mitochondrion. This is an uncharacterized protein from Arabidopsis thaliana (Mouse-ear cress).